The sequence spans 281 residues: Probable feruloyl esterase A (281 aa).

The N-terminal stretch at 1-21 (MKNFFSMHAILLACSAGAGLA) is a signal peptide. Cystine bridges form between cysteine 50–cysteine 279, cysteine 112–cysteine 115, and cysteine 248–cysteine 255. A substrate-binding site is contributed by aspartate 98. N-linked (GlcNAc...) asparagine glycosylation is present at asparagine 100. A substrate-binding site is contributed by tyrosine 101. Serine 154 (nucleophile) is an active-site residue. N-linked (GlcNAc...) asparagine glycosylation occurs at asparagine 173. Residue aspartate 215 is the Charge relay system of the active site. Histidine 268 contributes to the substrate binding site. The active-site Charge relay system is the histidine 268.

This sequence belongs to the AB hydrolase superfamily. FaeA family.

Its subcellular location is the secreted. It carries out the reaction feruloyl-polysaccharide + H2O = ferulate + polysaccharide.. Involved in degradation of plant cell walls. Hydrolyzes the feruloyl-arabinose ester bond in arabinoxylans, and the feruloyl-galactose ester bond in pectin. The chain is Probable feruloyl esterase A (faeA) from Aspergillus oryzae (strain ATCC 42149 / RIB 40) (Yellow koji mold).